The chain runs to 291 residues: Protein US2 (291 aa).

An N-acetylglycine; by host; partial modification is found at G2. The interval 251 to 270 is disordered; sequence PEVPDEQPTSPGRGPQETDP.

It belongs to the herpesviridae HHV-1 US2 protein family. As to quaternary structure, interacts with host KRT18.

It is found in the host cytoplasm. Its subcellular location is the host nucleus. In Homo sapiens (Human), this protein is Protein US2.